The chain runs to 262 residues: Tropinone reductase homolog At2g29310 (262 aa).

An NADP(+)-binding site is contributed by 13–37; sequence LVTGAASGIGYAIVEELASFGAIIH. Serine 146 is a binding site for substrate. Tyrosine 159 functions as the Proton acceptor in the catalytic mechanism.

It belongs to the short-chain dehydrogenases/reductases (SDR) family. SDR65C subfamily.

The sequence is that of Tropinone reductase homolog At2g29310 from Arabidopsis thaliana (Mouse-ear cress).